A 258-amino-acid chain; its full sequence is MASKQYEEALQKANLSDMAERYDDMAKEMRLAVTLAHEDKHILNVMARNLFSVAYKNLVSSRRSSWRMLCSERQKLEGKDPSVVHVINEKIKVVEEELLRFCDEVLDIITTYILSLEEAQKNIEYNIFFLKMKGDYYRYKAEVVTGPEHSEVSKHAAESYKEATEKAKTLPPTNPIKLGLALNYSVFHYEILNDSEKACSIAKGAFDEAIKELDTLSEEHYRDSTLIMQLLRDNLTLWTSREEGNVMGDEGKGDPDEN.

Belongs to the 14-3-3 family.

In Encephalitozoon cuniculi (strain GB-M1) (Microsporidian parasite), this protein is 14-3-3 protein homolog.